A 311-amino-acid chain; its full sequence is Olfactory receptor 10G4 (311 aa).

At 1-23 (MSNASLVTAFILTGLPHAPGLDA) the chain is on the extracellular side. Asn3 is a glycosylation site (N-linked (GlcNAc...) asparagine). A helical membrane pass occupies residues 24–44 (LLFGIFLVVYVLTVLGNLLIL). Topologically, residues 45 to 52 (LVIRVDSH) are cytoplasmic. Residues 53–73 (LHTPMYYFLTNLSFIDMWFST) traverse the membrane as a helical segment. Topologically, residues 74-98 (VTVPKMLMTLVSPSGRAISFHSCVA) are extracellular. An intrachain disulfide couples Cys96 to Cys188. A helical transmembrane segment spans residues 99 to 119 (QLYFFHFLGSTECFLYTVMSY). The Cytoplasmic segment spans residues 120–138 (DRYLAISYPLRYTSMMSGS). The helical transmembrane segment at 139 to 159 (RCALLATGTWLSGSLHSAVQT) threads the bilayer. At 160–196 (ILTFHLPYCGPNQIQHYFCDAPPILKLACADTSANVM) the chain is on the extracellular side. Residues 197–216 (VIFVDIGIVASGCFVLIVLS) traverse the membrane as a helical segment. Topologically, residues 217-236 (YVSIVCSILRIRTSDGRRRA) are cytoplasmic. Residues 237-257 (FQTCASHCIVVLCFFVPCVVI) form a helical membrane-spanning segment. The Extracellular segment spans residues 258 to 268 (YLRPGSMDAMD). Residues 269–289 (GVVAIFYTVLTPLLNPVVYTL) form a helical membrane-spanning segment. Residues 290 to 311 (RNKEVKKAVLKLRDKVAHPQRK) are Cytoplasmic-facing.

The protein belongs to the G-protein coupled receptor 1 family.

The protein resides in the cell membrane. In terms of biological role, odorant receptor. This chain is Olfactory receptor 10G4 (OR10G4), found in Homo sapiens (Human).